Consider the following 61-residue polypeptide: Small ribosomal subunit protein uS14 (61 aa).

The Zn(2+) site is built by Cys-24, Cys-27, Cys-40, and Cys-43.

Belongs to the universal ribosomal protein uS14 family. Zinc-binding uS14 subfamily. Part of the 30S ribosomal subunit. Contacts proteins S3 and S10. Zn(2+) is required as a cofactor.

Binds 16S rRNA, required for the assembly of 30S particles and may also be responsible for determining the conformation of the 16S rRNA at the A site. The chain is Small ribosomal subunit protein uS14 from Mycoplasmoides gallisepticum (strain R(low / passage 15 / clone 2)) (Mycoplasma gallisepticum).